The sequence spans 209 residues: uncharacterized protein (209 aa).

Transmembrane regions (helical) follow at residues 21-41, 81-101, 107-127, and 159-179; these read LAYL…VFGL, ILGL…RIAA, VLVN…LYVF, and AAGA…LLFF.

Its subcellular location is the cell membrane. This is an uncharacterized protein from Bacillus subtilis (strain 168).